Consider the following 1377-residue polypeptide: MNRIYSLRYSAVARGFIAVSEFARKCVHKSVRRLCFPVLLLIPVLFSAGSLAGTVNNELGYQLFRDFAENKGMFRPGATNIAIYNKQGEFVGTLDKAAMPDFSAVDSEIGVATLINPQYIASVKHNGGYTNVSFGDGENRYNIVDRNNAPSLDFHAPRLDKLVTEVAPTAVTAQGAVAGAYLDKERYPVFYRLGSGTQYIKDSNGQLTQMGGAYSWLTGGTVGSLSSYQNGEMISTSSGLVFDYKLNGAMPIYGEAGDSGSPLFAFDTVQNKWVLVGVLTAGNGAGGRGNNWAVIPLDFIGQKFNEDNDAPVTFRTSEGGALEWSFNSSTGAGALTQGTTTYAMHGQQGNDLNAGKNLIFQGQNGQINLKDSVSQGAGSLTFRDNYTVTTSNGSTWTGAGIVVDNGVSVNWQVNGVKGDNLHKIGEGTLTVQGTGINEGGLKVGDGKVVLNQQADNKGQVQAFSSVNIASGRPTVVLTDERQVNPDTVSWGYRGGTLDVNGNSLTFHQLKAADYGAVLANNVDKRATITLDYALRADKVALNGWSESGKGTAGNLYKYNNPYTNTTDYFILKQSTYGYFPTDQSSNATWEFVGHSQGDAQKLVADRFNTAGYLFHGQLKGNLNVDNRLPEGVTGALVMDGAADISGTFTQENGRLTLQGHPVIHAYNTQSVADKLAASGDHSVLTQPTSFSQEDWENRSFTFDRLSLKNTDFGLGRNATLNTTIQADNSSVTLGDSRVFIDKNDGQGTAFTLEEGTSVATKDADKSVFNGTVNLDNQSVLNINDIFNGGIQANNSTVNISSDSAVLGNSTLTSTALNLNKGANALASQSFVSDGPVNISDAALSLNSRPDEVSHTLLPVYDYAGSWNLKGDDARLNVGPYSMLSGNINVQDKGTVTLGGEGELSPDLTLQNQMLYSLFNGYRNIWSGSLNAPDATVSMTDTQWSMNGNSTAGNMKLNRTIVGFNGGTSPFTTLTTDNLDAVQSAFVMRTDLNKADKLVINKSATGHDNSIWVNFLKKPSNKDTLDIPLVSAPEATADNLFRASTRVVGFSDVTPILSVRKEDGKKEWVLDGYQVARNDGQGKAAATFMHISYNNFITEVNNLNKRMGDLRDINGEAGTWVRLLNGSGSADGGFTDHYTLLQMGADRKHELGSMDLFTGVMATYTDTDASADLYSGKTKSWGGGFYASGLFRSGAYFDVIAKYIHNENKYDLNFAGAGKQNFRSHSLYAGAEVGYRYHLTDTTFVEPQAELVWGRLQGQTFNWNDSGMDVSMRRNSVNPLVGRTGVVSGKTFSGKDWSLTARAGLHYEFDLTDSADVHLKDAAGEHQINGRKDSRMLYGVGLNARFGDNTRLGLEVERSAFGKYNTDDAINANIRYSF.

The N-terminal stretch at 1 to 52 (MNRIYSLRYSAVARGFIAVSEFARKCVHKSVRRLCFPVLLLIPVLFSAGSLA) is a signal peptide. Residues 53–302 (GTVNNELGYQ…AVIPLDFIGQ (250 aa)) enclose the Peptidase S6 domain. Residues histidine 125, aspartate 153, and serine 259 each act as charge relay system in the active site. Positions 1111–1377 (DINGEAGTWV…AINANIRYSF (267 aa)) constitute an Autotransporter domain.

In terms of processing, the C-terminus is blocked. Post-translationally, cleaved to release the mature protein from the outer membrane.

The protein localises to the periplasm. It localises to the secreted. Its subcellular location is the cell surface. The protein resides in the cell outer membrane. In terms of biological role, contributes to the development of lesions and deposition of fibrin in the avian air sacs. It can act both as an adhesin and as a serine protease. Agglutinates erythrocytes while in contact with the extracellular surface of the bacterial cells. Can adhere to purified hemoglobin and bind with great efficiency to extracellular matrix proteins. Cleaves casein and exhibits mucinolytic activity. In Escherichia coli, this protein is Temperature-sensitive hemagglutinin tsh autotransporter (tsh).